We begin with the raw amino-acid sequence, 596 residues long: Arginine--tRNA ligase (596 aa).

Positions 127–137 match the 'HIGH' region motif; sequence ANPTGPVHVGR.

It belongs to the class-I aminoacyl-tRNA synthetase family.

It localises to the cytoplasm. It catalyses the reaction tRNA(Arg) + L-arginine + ATP = L-arginyl-tRNA(Arg) + AMP + diphosphate. The protein is Arginine--tRNA ligase of Haloquadratum walsbyi (strain DSM 16790 / HBSQ001).